The primary structure comprises 257 residues: UPF0246 protein Rsph17025_0016 (257 aa).

Belongs to the UPF0246 family.

This Cereibacter sphaeroides (strain ATCC 17025 / ATH 2.4.3) (Rhodobacter sphaeroides) protein is UPF0246 protein Rsph17025_0016.